The primary structure comprises 294 residues: Deubiquitinase OTUD6B (294 aa).

Methionine 1 carries the post-translational modification N-acetylmethionine. The OTU domain maps to 148–285 (LEIKQIPSDG…GEHYNSVTRL (138 aa)). The cys-loop stretch occupies residues 153–159 (IPSDGHC). The active site involves aspartate 156. Cysteine 159 acts as the Nucleophile in catalysis. Positions 220–230 (IVNTAAWGGQL) are variable-loop. The his-loop stretch occupies residues 268–278 (YMRHAYGLGEH). The active site involves histidine 278.

Interacts with the eukaryotic translation initiation factor 4F complex. Ubiquitously expressed. Expression is observed in several organ systems including the cardiovascular, digestive, central and peripheral nervous and musculoskeletal systems.

It carries out the reaction Thiol-dependent hydrolysis of ester, thioester, amide, peptide and isopeptide bonds formed by the C-terminal Gly of ubiquitin (a 76-residue protein attached to proteins as an intracellular targeting signal).. Deubiquitinating enzyme that may play a role in the ubiquitin-dependent regulation of protein synthesis, downstream of mTORC1. May associate with the protein synthesis initiation complex and modify its ubiquitination to repress translation. May also repress DNA synthesis and modify different cellular targets thereby regulating cell growth and proliferation. May also play a role in proteasome assembly and function. This Mus musculus (Mouse) protein is Deubiquitinase OTUD6B.